We begin with the raw amino-acid sequence, 762 residues long: Probable inorganic carbon transporter subunit DabA (762 aa).

Positions 279, 281, 461, and 476 each coordinate Zn(2+).

Belongs to the inorganic carbon transporter (TC 9.A.2) DabA family. In terms of assembly, forms a complex with DabB. Zn(2+) serves as cofactor.

It is found in the cell inner membrane. Part of an energy-coupled inorganic carbon pump. This chain is Probable inorganic carbon transporter subunit DabA, found in Legionella pneumophila (strain Corby).